The sequence spans 493 residues: Glutamate--tRNA ligase (493 aa).

The short motif at 10–20 (PSPTGDPHVGT) is the 'HIGH' region element. Residues Cys-107, Cys-109, Cys-134, and His-136 each coordinate Zn(2+). The 'KMSKS' region signature appears at 251 to 255 (KLSKR). ATP is bound at residue Lys-254.

The protein belongs to the class-I aminoacyl-tRNA synthetase family. Glutamate--tRNA ligase type 1 subfamily. In terms of assembly, monomer. The cofactor is Zn(2+).

The protein localises to the cytoplasm. The enzyme catalyses tRNA(Glu) + L-glutamate + ATP = L-glutamyl-tRNA(Glu) + AMP + diphosphate. Functionally, catalyzes the attachment of glutamate to tRNA(Glu) in a two-step reaction: glutamate is first activated by ATP to form Glu-AMP and then transferred to the acceptor end of tRNA(Glu). The chain is Glutamate--tRNA ligase from Ectopseudomonas mendocina (strain ymp) (Pseudomonas mendocina).